Reading from the N-terminus, the 426-residue chain is 3-phosphoshikimate 1-carboxyvinyltransferase (426 aa).

The 3-phosphoshikimate site is built by K22, S23, and R27. Phosphoenolpyruvate is bound at residue K22. Phosphoenolpyruvate-binding residues include G96 and R124. 3-phosphoshikimate-binding residues include S170, S171, Q172, S198, D314, N337, and K341. Position 172 (Q172) interacts with phosphoenolpyruvate. Catalysis depends on D314, which acts as the Proton acceptor. R345, R387, and K412 together coordinate phosphoenolpyruvate.

The protein belongs to the EPSP synthase family. In terms of assembly, monomer.

The protein localises to the cytoplasm. The enzyme catalyses 3-phosphoshikimate + phosphoenolpyruvate = 5-O-(1-carboxyvinyl)-3-phosphoshikimate + phosphate. Its pathway is metabolic intermediate biosynthesis; chorismate biosynthesis; chorismate from D-erythrose 4-phosphate and phosphoenolpyruvate: step 6/7. In terms of biological role, catalyzes the transfer of the enolpyruvyl moiety of phosphoenolpyruvate (PEP) to the 5-hydroxyl of shikimate-3-phosphate (S3P) to produce enolpyruvyl shikimate-3-phosphate and inorganic phosphate. In Vibrio cholerae serotype O1 (strain ATCC 39541 / Classical Ogawa 395 / O395), this protein is 3-phosphoshikimate 1-carboxyvinyltransferase.